A 317-amino-acid polypeptide reads, in one-letter code: Beta-sarcoglycan (317 aa).

Residues 1–31 (MAAAAAATEQQSSNGPVKKSMREKAVERRNV) form a disordered region. Residues 1–64 (MAAAAAATEQ…GLRGRKGNLA (64 aa)) lie on the Cytoplasmic side of the membrane. Residues 20–31 (SMREKAVERRNV) are compositionally biased toward basic and acidic residues. Residues 65–85 (ICVIVLLFILAVINLIITLVI) traverse the membrane as a helical; Signal-anchor for type II membrane protein segment. Residues 86–317 (WAVIRIGPNG…TSDNPCGDLY (232 aa)) are Extracellular-facing. 3 N-linked (GlcNAc...) asparagine glycosylation sites follow: Asn-157, Asn-210, and Asn-257. 2 disulfide bridges follow: Cys-287/Cys-313 and Cys-289/Cys-306.

Belongs to the sarcoglycan beta/delta/gamma/zeta family. In terms of assembly, cross-link to form 2 major subcomplexes: one consisting of SGCB, SGCD and SGCG and the other consisting of SGCB and SGCD. The association between SGCB and SGCG is particularly strong while SGCA is loosely associated with the other sarcoglycans. Post-translationally, disulfide bonds are present.

It is found in the cell membrane. The protein localises to the sarcolemma. It localises to the cytoplasm. Its subcellular location is the cytoskeleton. Its function is as follows. Component of the sarcoglycan complex, a subcomplex of the dystrophin-glycoprotein complex which forms a link between the F-actin cytoskeleton and the extracellular matrix. The chain is Beta-sarcoglycan (SGCB) from Bos taurus (Bovine).